The chain runs to 277 residues: Probable ketoamine kinase HMPREF0351_12196 (277 aa).

84-86 serves as a coordination point for ATP; it reads EWI. Aspartate 186 functions as the Proton acceptor in the catalytic mechanism.

The protein belongs to the fructosamine kinase family.

The catalysed reaction is N(6)-(D-ribulosyl)-L-lysine + ATP = N(6)-(3-O-phospho-D-ribulosyl)-L-lysine + ADP + H(+). The enzyme catalyses N-(D-ribulosyl)-cadaverine + ATP = N-(3-O-phospho-D-ribulosyl)-cadaverine + ADP + H(+). It carries out the reaction N(6)-(D-erythrulosyl)-L-lysine + ATP = N(6)-(3-O-phospho-D-erythrulosyl)-L-lysine + ADP + H(+). It catalyses the reaction N-(D-erythrulosyl)-cadaverine + ATP = N-(3-O-phospho-D-erythrulosyl)-cadaverine + ADP + H(+). The catalysed reaction is N(6)-D-ribulosyl-L-lysyl-[protein] + ATP = N(6)-(3-O-phospho-D-ribulosyl)-L-lysyl-[protein] + ADP + H(+). The enzyme catalyses N(6)-(D-erythrulosyl)-L-lysyl-[protein] + ATP = N(6)-(3-O-phospho-D-erythrulosyl)-L-lysyl-[protein] + ADP + H(+). In terms of biological role, ketoamine kinase that phosphorylates ketoamines, such as erythruloselysine, erythrulosecadaverine, ribuloselysine and ribulosecadaverine, on the third carbon of the sugar moiety to generate ketoamine 3-phosphate. Has higher activity on free lysine (erythruloselysine and ribuloselysine), than on ribuloselysine and erythruloselysine residues on glycated proteins. The sequence is that of Probable ketoamine kinase HMPREF0351_12196 from Enterococcus faecium (strain ATCC BAA-472 / TX0016 / DO).